Reading from the N-terminus, the 440-residue chain is 5-methylthioadenosine/S-adenosylhomocysteine deaminase (440 aa).

Residues His69 and His71 each coordinate Zn(2+). Residues Glu98 and His190 each coordinate substrate. His217 contributes to the Zn(2+) binding site. Residues Glu220 and Asp305 each contribute to the substrate site. Zn(2+) is bound at residue Asp305.

The protein belongs to the metallo-dependent hydrolases superfamily. MTA/SAH deaminase family. It depends on Zn(2+) as a cofactor.

It catalyses the reaction S-adenosyl-L-homocysteine + H2O + H(+) = S-inosyl-L-homocysteine + NH4(+). The enzyme catalyses S-methyl-5'-thioadenosine + H2O + H(+) = S-methyl-5'-thioinosine + NH4(+). Its function is as follows. Catalyzes the deamination of 5-methylthioadenosine and S-adenosyl-L-homocysteine into 5-methylthioinosine and S-inosyl-L-homocysteine, respectively. Is also able to deaminate adenosine. The sequence is that of 5-methylthioadenosine/S-adenosylhomocysteine deaminase from Desulfovibrio desulfuricans (strain ATCC 27774 / DSM 6949 / MB).